An 81-amino-acid polypeptide reads, in one-letter code: Acyl carrier protein (81 aa).

The 76-residue stretch at 4 to 79 folds into the Carrier domain; sequence SEILEKVKAI…DVLDFINNKV (76 aa). O-(pantetheine 4'-phosphoryl)serine is present on Ser-39.

The protein belongs to the acyl carrier protein (ACP) family. In terms of processing, 4'-phosphopantetheine is transferred from CoA to a specific serine of apo-ACP by AcpS. This modification is essential for activity because fatty acids are bound in thioester linkage to the sulfhydryl of the prosthetic group.

The protein resides in the cytoplasm. Its pathway is lipid metabolism; fatty acid biosynthesis. In terms of biological role, carrier of the growing fatty acid chain in fatty acid biosynthesis. This Thermosynechococcus vestitus (strain NIES-2133 / IAM M-273 / BP-1) protein is Acyl carrier protein.